Here is a 241-residue protein sequence, read N- to C-terminus: 2-C-methyl-D-erythritol 4-phosphate cytidylyltransferase (241 aa).

It belongs to the IspD/TarI cytidylyltransferase family. IspD subfamily.

The catalysed reaction is 2-C-methyl-D-erythritol 4-phosphate + CTP + H(+) = 4-CDP-2-C-methyl-D-erythritol + diphosphate. Its pathway is isoprenoid biosynthesis; isopentenyl diphosphate biosynthesis via DXP pathway; isopentenyl diphosphate from 1-deoxy-D-xylulose 5-phosphate: step 2/6. Functionally, catalyzes the formation of 4-diphosphocytidyl-2-C-methyl-D-erythritol from CTP and 2-C-methyl-D-erythritol 4-phosphate (MEP). This chain is 2-C-methyl-D-erythritol 4-phosphate cytidylyltransferase, found in Hahella chejuensis (strain KCTC 2396).